A 346-amino-acid chain; its full sequence is Fe(3+) ions import ATP-binding protein FbpC 2 (346 aa).

An ABC transporter domain is found at 2-234; it reads LELHRVSKSF…PNSEDIATFL (233 aa). 34–41 is an ATP binding site; the sequence is GPSGSGKT.

This sequence belongs to the ABC transporter superfamily. Fe(3+) ion importer (TC 3.A.1.10) family. As to quaternary structure, the complex is composed of two ATP-binding proteins (FbpC), two transmembrane proteins (FbpB) and a solute-binding protein (FbpA).

It is found in the cell inner membrane. The enzyme catalyses Fe(3+)(out) + ATP + H2O = Fe(3+)(in) + ADP + phosphate + H(+). Functionally, part of the ABC transporter complex FbpABC involved in Fe(3+) ions import. Responsible for energy coupling to the transport system. The sequence is that of Fe(3+) ions import ATP-binding protein FbpC 2 from Pectobacterium atrosepticum (strain SCRI 1043 / ATCC BAA-672) (Erwinia carotovora subsp. atroseptica).